The following is a 291-amino-acid chain: G1/S-specific cyclin-D1 (291 aa).

Threonine 282 is subject to Phosphothreonine.

The protein belongs to the cyclin family. Cyclin D subfamily. Interacts with the CDK4 and CDK6 protein kinases to form a serine/threonine kinase holoenzyme complex. The cyclin subunit imparts substrate specificity to the complex. Post-translationally, phosphorylation at Thr-282 by MAP kinases is required for ubiquitination and degradation by the DCX(AMBRA1) complex. In terms of processing, ubiquitinated by the DCX(AMBRA1) complex during the transition from G1 to S cell phase, leading to its degradation. The DCX(AMBRA1) complex represents the major regulator of CCND1 stability during the G1/S transition.

It localises to the nucleus. The protein localises to the cytoplasm. Its function is as follows. Regulatory component of the cyclin D1-CDK4 (DC) complex that phosphorylates and inhibits members of the retinoblastoma (RB) protein family including RB1 and regulates the cell-cycle during G(1)/S transition. Phosphorylation of RB1 allows dissociation of the transcription factor E2F from the RB/E2F complex and the subsequent transcription of E2F target genes which are responsible for the progression through the G(1) phase. Hypophosphorylates RB1 in early G(1) phase. Cyclin D-CDK4 complexes are major integrators of various mitogenenic and antimitogenic signals. The protein is G1/S-specific cyclin-D1 (ccnd1) of Danio rerio (Zebrafish).